The following is a 330-amino-acid chain: 7,8-didemethyl-8-hydroxy-5-deazariboflavin synthase (330 aa).

In terms of domain architecture, Radical SAM core spans 13–253 (VTFSKNAFIP…EDISIQVPPN (241 aa)). The [4Fe-4S] cluster site is built by Cys27, Cys31, and Cys34.

The protein belongs to the radical SAM superfamily. CofG family. In terms of assembly, consists of two subunits, CofG and CofH. [4Fe-4S] cluster serves as cofactor.

The enzyme catalyses 5-amino-5-(4-hydroxybenzyl)-6-(D-ribitylimino)-5,6-dihydrouracil + S-adenosyl-L-methionine = 7,8-didemethyl-8-hydroxy-5-deazariboflavin + 5'-deoxyadenosine + L-methionine + NH4(+) + H(+). Its pathway is cofactor biosynthesis; coenzyme F0 biosynthesis. Catalyzes the radical-mediated synthesis of 7,8-didemethyl-8-hydroxy-5-deazariboflavin from 5-amino-5-(4-hydroxybenzyl)-6-(D-ribitylimino)-5,6-dihydrouracil. The chain is 7,8-didemethyl-8-hydroxy-5-deazariboflavin synthase from Methanococcus maripaludis (strain DSM 14266 / JCM 13030 / NBRC 101832 / S2 / LL).